A 778-amino-acid chain; its full sequence is 5-methyltetrahydropteroyltriglutamate--homocysteine methyltransferase (778 aa).

5-methyltetrahydropteroyltri-L-glutamate-binding positions include 17–20 (RELK) and lysine 118. Residues 436–438 (IGS) and glutamate 489 contribute to the L-homocysteine site. Residues 436–438 (IGS) and glutamate 489 each bind L-methionine. Residues 520-521 (RC) and tryptophan 566 contribute to the 5-methyltetrahydropteroyltri-L-glutamate site. Residue aspartate 604 coordinates L-homocysteine. Position 604 (aspartate 604) interacts with L-methionine. Residue glutamate 610 participates in 5-methyltetrahydropteroyltri-L-glutamate binding. The Zn(2+) site is built by histidine 646, cysteine 648, and glutamate 670. Histidine 699 functions as the Proton donor in the catalytic mechanism. Residue cysteine 731 participates in Zn(2+) binding.

The protein belongs to the vitamin-B12 independent methionine synthase family. It depends on Zn(2+) as a cofactor.

It catalyses the reaction 5-methyltetrahydropteroyltri-L-glutamate + L-homocysteine = tetrahydropteroyltri-L-glutamate + L-methionine. The protein operates within amino-acid biosynthesis; L-methionine biosynthesis via de novo pathway; L-methionine from L-homocysteine (MetE route): step 1/1. In terms of biological role, catalyzes the transfer of a methyl group from 5-methyltetrahydrofolate to homocysteine resulting in methionine formation. This chain is 5-methyltetrahydropteroyltriglutamate--homocysteine methyltransferase, found in Vibrio vulnificus (strain CMCP6).